Consider the following 177-residue polypeptide: Peptide deformylase 2 (177 aa).

Fe cation-binding residues include cysteine 99 and histidine 141. Glutamate 142 is a catalytic residue. Histidine 145 contributes to the Fe cation binding site.

Belongs to the polypeptide deformylase family. The cofactor is Fe(2+).

The catalysed reaction is N-terminal N-formyl-L-methionyl-[peptide] + H2O = N-terminal L-methionyl-[peptide] + formate. Its function is as follows. Removes the formyl group from the N-terminal Met of newly synthesized proteins. Requires at least a dipeptide for an efficient rate of reaction. N-terminal L-methionine is a prerequisite for activity but the enzyme has broad specificity at other positions. This is Peptide deformylase 2 from Ralstonia nicotianae (strain ATCC BAA-1114 / GMI1000) (Ralstonia solanacearum).